The chain runs to 295 residues: CCAAT-binding factor complex subunit php4 (295 aa).

Low complexity predominate over residues 1-19 (MESSKSPSEVEKSSSASPA). The interval 1 to 69 (MESSKSPSEV…GPTSALSVEE (69 aa)) is disordered. A coiled-coil region spans residues 73–111 (RVREKQYQDTIGKLQKENNELLEQLEMLQAQLKNSTLDS). The short motif at 93–100 (LLEQLEML) is the Nuclear export signal element. Residues 108–130 (TLDSPKEVEVNSEVVKPDSATTE) form a disordered region.

In terms of assembly, component of tha CCAAT-binding complex composed of at least php2, php3, php4 and php5. Interacts with crm1 and grx4.

Its subcellular location is the cytoplasm. The protein resides in the nucleus. The protein localises to the cytoskeleton. It localises to the spindle pole. Its function is as follows. Component of the transcription regulatory CCAAT-binding complex. Required for the reprogramming of the cell for iron use. Down-regulates pcl1, sdh4, and isa1 underlow-iron conditions. The sequence is that of CCAAT-binding factor complex subunit php4 (php4) from Schizosaccharomyces pombe (strain 972 / ATCC 24843) (Fission yeast).